Consider the following 22-residue polypeptide: Putative ORF3b protein (22 aa).

Its function is as follows. Acts as an interferon antagonist when expressed ex vivo. The chain is Putative ORF3b protein from Severe acute respiratory syndrome coronavirus 2 (2019-nCoV).